We begin with the raw amino-acid sequence, 66 residues long: Large ribosomal subunit protein bL33c (66 aa).

The protein belongs to the bacterial ribosomal protein bL33 family.

The protein localises to the plastid. It localises to the chloroplast. This chain is Large ribosomal subunit protein bL33c, found in Illicium oligandrum (Star anise).